Reading from the N-terminus, the 277-residue chain is Carbonyl reductase [NADPH] 3 (277 aa).

Residue S2 is modified to N-acetylserine. Residues 10–34 (VTGA…GDVV), 38–42 (RDVAR), 63–64 (DI), and N90 each bind NADP(+). S30 is modified (phosphoserine). Substrate is bound at residue S140. Residue Y194 is the Proton acceptor of the active site. NADP(+) is bound by residues 194 to 198 (YGVSK) and D239.

This sequence belongs to the short-chain dehydrogenases/reductases (SDR) family. As to expression, detected in ovary, pancreas, intestine, colon, kidney, brain, thymus, lung, heart, liver, spleen, leukocyte, prostate and testis.

The protein resides in the cytoplasm. The catalysed reaction is a secondary alcohol + NADP(+) = a ketone + NADPH + H(+). The enzyme catalyses a quinone + NADPH + H(+) = a quinol + NADP(+). Functionally, catalyzes the NADPH-dependent reduction of carbonyl compounds to their corresponding alcohols. Has low NADPH-dependent oxidoreductase activity. Acts on several orthoquinones, acts as well on non-quinone compounds, such as isatin or on the anticancer drug oracin. Best substrates for CBR3 is 1,2- naphthoquinone, hence could play a role in protection against cytotoxicity of exogenous quinones. Exerts activity toward ortho-quinones but not paraquinones. No endogenous substrate for CBR3 except isatin has been identified. The polypeptide is Carbonyl reductase [NADPH] 3 (Homo sapiens (Human)).